A 150-amino-acid polypeptide reads, in one-letter code: Macrodomain Ter protein (150 aa).

It belongs to the MatP family. Homodimer.

The protein resides in the cytoplasm. Functionally, required for spatial organization of the terminus region of the chromosome (Ter macrodomain) during the cell cycle. Prevents early segregation of duplicated Ter macrodomains during cell division. Binds specifically to matS, which is a 13 bp signature motif repeated within the Ter macrodomain. The sequence is that of Macrodomain Ter protein from Escherichia coli O8 (strain IAI1).